The following is a 132-amino-acid chain: D-ribose pyranase (132 aa).

The active-site Proton donor is His20. Substrate is bound by residues Asp28, His99, and 121–123 (YSN).

The protein belongs to the RbsD / FucU family. RbsD subfamily. As to quaternary structure, homodecamer.

Its subcellular location is the cytoplasm. The catalysed reaction is beta-D-ribopyranose = beta-D-ribofuranose. It participates in carbohydrate metabolism; D-ribose degradation; D-ribose 5-phosphate from beta-D-ribopyranose: step 1/2. Its function is as follows. Catalyzes the interconversion of beta-pyran and beta-furan forms of D-ribose. This Lactococcus lactis subsp. lactis (strain IL1403) (Streptococcus lactis) protein is D-ribose pyranase.